The sequence spans 424 residues: 3-isopropylmalate dehydratase large subunit (424 aa).

The [4Fe-4S] cluster site is built by Cys299, Cys359, and Cys362.

This sequence belongs to the aconitase/IPM isomerase family. LeuC type 2 subfamily. As to quaternary structure, heterodimer of LeuC and LeuD. [4Fe-4S] cluster serves as cofactor.

It catalyses the reaction (2R,3S)-3-isopropylmalate = (2S)-2-isopropylmalate. Its pathway is amino-acid biosynthesis; L-leucine biosynthesis; L-leucine from 3-methyl-2-oxobutanoate: step 2/4. Catalyzes the isomerization between 2-isopropylmalate and 3-isopropylmalate, via the formation of 2-isopropylmaleate. The protein is 3-isopropylmalate dehydratase large subunit of Hydrogenobaculum sp. (strain Y04AAS1).